We begin with the raw amino-acid sequence, 156 residues long: Cyanate hydratase (156 aa).

Residues Arg96, Glu99, and Ser122 contribute to the active site.

The protein belongs to the cyanase family.

It carries out the reaction cyanate + hydrogencarbonate + 3 H(+) = NH4(+) + 2 CO2. In terms of biological role, catalyzes the reaction of cyanate with bicarbonate to produce ammonia and carbon dioxide. This chain is Cyanate hydratase, found in Pseudomonas aeruginosa (strain LESB58).